The primary structure comprises 308 residues: Elongation factor Ts (308 aa).

Residues 80-83 form an involved in Mg(2+) ion dislocation from EF-Tu region; it reads TDFV.

Belongs to the EF-Ts family.

It is found in the cytoplasm. Its function is as follows. Associates with the EF-Tu.GDP complex and induces the exchange of GDP to GTP. It remains bound to the aminoacyl-tRNA.EF-Tu.GTP complex up to the GTP hydrolysis stage on the ribosome. This chain is Elongation factor Ts, found in Methylobacterium radiotolerans (strain ATCC 27329 / DSM 1819 / JCM 2831 / NBRC 15690 / NCIMB 10815 / 0-1).